A 1575-amino-acid polypeptide reads, in one-letter code: Lysophospholipase NTE1 (1575 aa).

A disordered region spans residues methionine 1–asparagine 56. Residues methionine 1–glycine 99 lie on the Cytoplasmic side of the membrane. Positions leucine 19–serine 48 are enriched in low complexity. A helical membrane pass occupies residues isoleucine 100–valine 120. Over valine 121–threonine 151 the chain is Lumenal. The helical transmembrane segment at methionine 152–isoleucine 172 threads the bilayer. Over arginine 173–isoleucine 1575 the chain is Cytoplasmic. Disordered regions lie at residues aspartate 339 to valine 425 and glycine 568 to glycine 587. The segment covering arginine 409–serine 424 has biased composition (basic residues). A nucleoside 3',5'-cyclic phosphate contacts are provided by residues glycine 737–arginine 856 and arginine 894–arginine 1014. The region spanning leucine 1272–lysine 1436 is the PNPLA domain. Positions glycine 1276–glycine 1281 match the GXGXXG motif. The GXSXG motif lies at glycine 1303–glycine 1307. Residue serine 1305 is the Nucleophile of the active site. Aspartate 1423 (proton acceptor) is an active-site residue. The short motif at aspartate 1423–glycine 1425 is the DGA/G element.

It belongs to the NTE family.

It localises to the endoplasmic reticulum membrane. It carries out the reaction a 1-acyl-sn-glycero-3-phosphocholine + H2O = sn-glycerol 3-phosphocholine + a fatty acid + H(+). Its activity is regulated as follows. Inhibited by organophosphorus esters. In terms of biological role, intracellular phospholipase B that catalyzes the double deacylation of phosphatidylcholine (PC) to glycerophosphocholine (GroPCho). Plays an important role in membrane lipid homeostasis. Responsible for the rapid PC turnover in response to inositol, elevated temperatures, or when choline is present in the growth medium. The chain is Lysophospholipase NTE1 (NTE1) from Coccidioides immitis (strain RS) (Valley fever fungus).